The chain runs to 228 residues: Prolactin (228 aa).

The first 29 residues, 1–29, serve as a signal peptide directing secretion; sequence MGTKRSSLKGSLLLLLLMSSLFLFKSVES. A disulfide bridge connects residues Cys33 and Cys40. 3 positions are modified to phosphoserine: Ser55, Ser63, and Ser119. 2 cysteine pairs are disulfide-bonded: Cys87–Cys203 and Cys220–Cys228.

Belongs to the somatotropin/prolactin family. As to quaternary structure, interacts with PRLR.

The protein resides in the secreted. Functionally, prolactin acts primarily on the mammary gland by promoting lactation, mammogenesis, mitogenesis and osmoregulation. The polypeptide is Prolactin (PRL) (Trichosurus vulpecula (Brush-tailed possum)).